We begin with the raw amino-acid sequence, 73 residues long: Defensin-like protein 34 (73 aa).

The first 25 residues, 1-25 (MASNKVSFFLVLCLCVLSTAEFGEA), serve as a signal peptide directing secretion. 3 cysteine pairs are disulfide-bonded: C33-C59, C45-C68, and C49-C70.

It belongs to the DEFL family.

The protein localises to the secreted. In Arabidopsis thaliana (Mouse-ear cress), this protein is Defensin-like protein 34.